Reading from the N-terminus, the 240-residue chain is 6-phosphogluconolactonase (240 aa).

It belongs to the glucosamine/galactosamine-6-phosphate isomerase family. 6-phosphogluconolactonase subfamily.

It catalyses the reaction 6-phospho-D-glucono-1,5-lactone + H2O = 6-phospho-D-gluconate + H(+). It functions in the pathway carbohydrate degradation; pentose phosphate pathway; D-ribulose 5-phosphate from D-glucose 6-phosphate (oxidative stage): step 2/3. Hydrolysis of 6-phosphogluconolactone to 6-phosphogluconate. In Nostoc sp. (strain PCC 7120 / SAG 25.82 / UTEX 2576), this protein is 6-phosphogluconolactonase (pgl).